The primary structure comprises 110 residues: Protein YcgL (110 aa).

The region spanning 14 to 98 (MFCVIYRSSK…PPEDLLKQHL (85 aa)) is the YcgL domain.

The chain is Protein YcgL from Salmonella arizonae (strain ATCC BAA-731 / CDC346-86 / RSK2980).